The following is a 31-amino-acid chain: Photosystem I reaction center subunit XII (31 aa).

The helical transmembrane segment at 7-26 (QVFLALIIALIPGILADRLG) threads the bilayer.

The protein belongs to the PsaM family.

It localises to the plastid. Its subcellular location is the chloroplast thylakoid membrane. This chain is Photosystem I reaction center subunit XII, found in Euglena deses.